Reading from the N-terminus, the 67-residue chain is Alpha-actitoxin-Ms11a-3 (67 aa).

Positions 1-24 (MASKIFFVLAVFLVMSAVLPESFA) are cleaved as a signal peptide. Disulfide bonds link C26-C41, C33-C46, and C40-C61. At K66 the chain carries Lysine amide.

Its subcellular location is the secreted. The protein localises to the nematocyst. Its function is as follows. Alpha-toxins act on postsynaptic membranes, they bind to the nicotinic acetylcholine receptors (nAChR) and thus inhibit them. This toxin shows inhibition against mouse alpha-1-beta-1-delta-epsilon (CHRNA1-CHRNB1-CHRND-CHRNE) (IC(50)=1215 nM), rat alpha-3-beta-4/CHRNA3-CHRNB4 (IC(50)=5.173 uM), rat alpha-7/CHRNA7 (IC(50)=4.786 uM), human alpha-7/CHRNA7 (IC(50)=8.869 uM), and rat alpha-9-alpha-10/CHRNA9-CHRNA10 (IC(50)=202 nM). Also competes with alpha-bungarotoxin for binding to orthosteric sites on muscle-type T.carlifornicus (IC(50)=256 nM) and human alpha-7/CHRNA7 nAChRs (IC(50)=19.81 uM). This Metridium senile (Brown sea anemone) protein is Alpha-actitoxin-Ms11a-3.